Reading from the N-terminus, the 356-residue chain is S-adenosylmethionine:tRNA ribosyltransferase-isomerase (356 aa).

This sequence belongs to the QueA family. In terms of assembly, monomer.

It is found in the cytoplasm. The catalysed reaction is 7-aminomethyl-7-carbaguanosine(34) in tRNA + S-adenosyl-L-methionine = epoxyqueuosine(34) in tRNA + adenine + L-methionine + 2 H(+). Its pathway is tRNA modification; tRNA-queuosine biosynthesis. Its function is as follows. Transfers and isomerizes the ribose moiety from AdoMet to the 7-aminomethyl group of 7-deazaguanine (preQ1-tRNA) to give epoxyqueuosine (oQ-tRNA). In Escherichia coli (strain UTI89 / UPEC), this protein is S-adenosylmethionine:tRNA ribosyltransferase-isomerase.